The chain runs to 130 residues: Chaperone protein SycT (130 aa).

As to quaternary structure, binds to YopT.

Functionally, functions as a specific chaperone for YopT. The polypeptide is Chaperone protein SycT (sycT) (Yersinia enterocolitica).